The primary structure comprises 508 residues: Prenylcysteine oxidase 1 (508 aa).

A signal peptide spans 1 to 31 (MDPAAPGLACSILRLGLGLLLLCSWWYPGSA). N-linked (GlcNAc...) asparagine glycans are attached at residues N199, N291, and N356.

It belongs to the prenylcysteine oxidase family. The cofactor is FAD.

The protein localises to the lysosome. It catalyses the reaction an S-polyprenyl-L-cysteine + O2 + H2O = a polyprenal + L-cysteine + H2O2. The enzyme catalyses S-(2E,6E)-farnesyl-L-cysteine + O2 + H2O = (2E,6E)-farnesal + L-cysteine + H2O2. It carries out the reaction [(2E,6E,10E)-geranylgeranyl]-L-cysteine + O2 + H2O = (2E,6E,10E)-geranylgeranial + L-cysteine + H2O2. Prenylcysteine oxidase that cleaves the thioether bond of prenyl-L-cysteines, such as farnesylcysteine and geranylgeranylcysteine. Only active against free prenylcysteines and not prenylcysteine residues within prenylated proteins or peptides. Involved in the final step in the degradation of prenylated proteins, by degrading prenylcysteines after the protein has been degraded. The polypeptide is Prenylcysteine oxidase 1 (Bos taurus (Bovine)).